The following is a 490-amino-acid chain: Lignostilbene-alpha,beta-dioxygenase isozyme III (490 aa).

The Fe cation site is built by His167, His218, His285, and His477.

It belongs to the carotenoid oxygenase family. As to quaternary structure, homodimer of two beta subunits. It depends on Fe(2+) as a cofactor.

It carries out the reaction 1,2-bis(4-hydroxy-3-methoxyphenyl)ethylene + O2 = 2 vanillin. Activity is high with beta-5 type stilbene and minimal with beta-1 type stilbene. A 4-hydroxyl group and trans-stilbene structure is essential for the binding of substrates to the enzyme. In terms of biological role, catalyzes the cleavage of the interphenyl double bond (C alpha-C beta) of lignin-derived polyphenolic diaryl-propane type compounds (Stilbene). The chain is Lignostilbene-alpha,beta-dioxygenase isozyme III from Sphingomonas paucimobilis (Pseudomonas paucimobilis).